Reading from the N-terminus, the 117-residue chain is RutC family protein HD_0322 (117 aa).

It belongs to the RutC family.

The protein is RutC family protein HD_0322 of Haemophilus ducreyi (strain 35000HP / ATCC 700724).